We begin with the raw amino-acid sequence, 106 residues long: Venom family 8-like peptide Pr8a (106 aa).

Residues 1 to 17 form the signal peptide; sequence MSPIAFLLPFLLQMVLS.

Post-translationally, contains 2 disulfide bonds. In terms of tissue distribution, expressed by the venom gland (anterior main gland) (at protein level).

Its subcellular location is the secreted. This is Venom family 8-like peptide Pr8a from Platymeris rhadamanthus (Red spot assassin bug).